A 484-amino-acid polypeptide reads, in one-letter code: MSIKGDIGVIGLAVMGQNLILNMNDNGFKVVAYNRTASKVDEFLAGEAKDTNIIGAYSLEDLAAKLEKPRKIMLMVRAGEVVDQFIDALLPHLEAGDIIIDGGNSNYPDTNRRTITLAEKGIRFIGTGVSGGEEGARHGPSIMPGGNEEAWPFVKPILQAISAKTDKDEPCCDWVGKEGAGHFVKMVHNGIEYGDMQLICEAYQFLKDGLGLNYEEMHAIFADWKNTELDSYLIDITADILAYKDADGEPLVEKILDTAGQKGTGKWTGINALDFGIPLTLITEAVFARCVSAFKDQRVAVSQLFNKTITPISDDKKEWIEAVRKALLASKIISYAQGFMLIREASENFEWNINYGATALLWREGCIIRSAFLGNIRDAYEANPGLVFLGSDPYFQNILQSAMADWRKVVAKSIEIGIPMPCMAAAITFLDGYSSEHLPANLLQAQRDYFGAHTYERTDKPRCSFFHTNWTGRGGNTASTTYDV.

NADP(+) is bound by residues glycine 11–glycine 16, asparagine 34–threonine 36, valine 76–alanine 78, and asparagine 104. Residues asparagine 104 and serine 130 to glycine 132 each bind substrate. Residue lysine 185 is the Proton acceptor of the active site. Substrate is bound at residue histidine 188–asparagine 189. Glutamate 192 acts as the Proton donor in catalysis. Substrate is bound by residues tyrosine 193, lysine 262, arginine 289, arginine 447, and histidine 453.

It belongs to the 6-phosphogluconate dehydrogenase family. As to quaternary structure, homodimer.

It catalyses the reaction 6-phospho-D-gluconate + NADP(+) = D-ribulose 5-phosphate + CO2 + NADPH. It participates in carbohydrate degradation; pentose phosphate pathway; D-ribulose 5-phosphate from D-glucose 6-phosphate (oxidative stage): step 3/3. Its function is as follows. Catalyzes the oxidative decarboxylation of 6-phosphogluconate to ribulose 5-phosphate and CO(2), with concomitant reduction of NADP to NADPH. The polypeptide is 6-phosphogluconate dehydrogenase, decarboxylating (gnd) (Haemophilus ducreyi (strain 35000HP / ATCC 700724)).